Consider the following 443-residue polypeptide: MSEMTPPQIVSELDKFIIGQEKAKRAVSIALRNRWRRMQLNSELRYEVTPKNILMIGPTGVGKTEIARRLAKLADSPFIKVEATKFTEVGYVGKEVDSIIRDLTDAAIKMIRIKNINKNKVRVEEIVEEKILDVLVPTPKKNWTESEKNESLAKTIQTFRKKLREGVLDEKEIEINILSTTMGVEIMAPPGMEELTNQLQSLFQNLGGHKKSSRRLKIKDAIVLLTEEEAAKLINQEEIKKEAINAVEQNGIVFIDEIDKICRRGDSSGPDISREGVQRDLLPLVEGCTVSTKHGMVKTDHILFIASGAFQTSTPSDLIPELQGRLPIKVELQALTIDDFEKILTEPTASITAQYKALMETEGVYINFTKEGIRNIAEAAWKVNESIENIGARRLHTVLEKLMEDISFNASDNKGNTIEINSNYVEEHLDQLTSNEDLGRFIL.

Residues Ile-18, 60 to 65 (GVGKTE), Asp-256, Glu-321, and Arg-393 each bind ATP.

It belongs to the ClpX chaperone family. HslU subfamily. As to quaternary structure, a double ring-shaped homohexamer of HslV is capped on each side by a ring-shaped HslU homohexamer. The assembly of the HslU/HslV complex is dependent on binding of ATP.

Its subcellular location is the cytoplasm. ATPase subunit of a proteasome-like degradation complex; this subunit has chaperone activity. The binding of ATP and its subsequent hydrolysis by HslU are essential for unfolding of protein substrates subsequently hydrolyzed by HslV. HslU recognizes the N-terminal part of its protein substrates and unfolds these before they are guided to HslV for hydrolysis. The sequence is that of ATP-dependent protease ATPase subunit HslU from Buchnera aphidicola subsp. Acyrthosiphon pisum (strain 5A).